The following is a 528-amino-acid chain: Ribonuclease Y (528 aa).

Residues 15 to 35 traverse the membrane as a helical segment; the sequence is SLFFLALICGSIIGYFLYSFF. Positions 217 to 277 constitute a KH domain; it reads NISVVNIPNE…IRREIAKKTL (61 aa). Positions 343-436 constitute an HD domain; sequence VLKHSLEVAF…VAIADTLSSA (94 aa).

It belongs to the RNase Y family.

Its subcellular location is the cell membrane. Endoribonuclease that initiates mRNA decay. The sequence is that of Ribonuclease Y from Aster yellows witches'-broom phytoplasma (strain AYWB).